A 472-amino-acid chain; its full sequence is Phosphoenolpyruvate carboxylase (472 aa).

Belongs to the PEPCase type 2 family. In terms of assembly, homotetramer. Requires Mg(2+) as cofactor.

The enzyme catalyses oxaloacetate + phosphate = phosphoenolpyruvate + hydrogencarbonate. Its function is as follows. Catalyzes the irreversible beta-carboxylation of phosphoenolpyruvate (PEP) to form oxaloacetate (OAA), a four-carbon dicarboxylic acid source for the tricarboxylic acid cycle. The polypeptide is Phosphoenolpyruvate carboxylase (Pyrococcus furiosus (strain ATCC 43587 / DSM 3638 / JCM 8422 / Vc1)).